Consider the following 339-residue polypeptide: DNA-directed RNA polymerase subunit alpha (339 aa).

The interval 1 to 233 (MVREEVAGST…DLFLPFLHAE (233 aa)) is alpha N-terminal domain (alpha-NTD). The segment at 264–339 (KKGIPLNCIF…IDLLKNKLSF (76 aa)) is alpha C-terminal domain (alpha-CTD).

This sequence belongs to the RNA polymerase alpha chain family. In terms of assembly, in plastids the minimal PEP RNA polymerase catalytic core is composed of four subunits: alpha, beta, beta', and beta''. When a (nuclear-encoded) sigma factor is associated with the core the holoenzyme is formed, which can initiate transcription.

The protein localises to the plastid. The protein resides in the chloroplast. It catalyses the reaction RNA(n) + a ribonucleoside 5'-triphosphate = RNA(n+1) + diphosphate. Its function is as follows. DNA-dependent RNA polymerase catalyzes the transcription of DNA into RNA using the four ribonucleoside triphosphates as substrates. The chain is DNA-directed RNA polymerase subunit alpha from Heteranthelium piliferum (Elymus pilifer).